The sequence spans 433 residues: Alpha-(1-&gt;3)-arabinofuranosyltransferase (433 aa).

Helical transmembrane passes span 118-138 (LFISINTAAILVAAYLLLRMF), 140-160 (FTLTSVAAPALILAMFATETV), 164-184 (LVFTNINGCILLLEVLFLRWL), 197-217 (LAIGLTLVLKPLLGPLLLLPL), 224-244 (ALVAAVVVPVVVNVAALPLVS), 280-300 (WLILFLRILFTAITFGALWLL), 310-330 (LFWFTTSSGVLLLWSWLVMSL), 333-353 (GYYSMMLFPFLMTVVLPNSVI), 356-376 (WPAWLGVYGFMTLDRWLLFNW), and 385-405 (YLKITYGWSLLLIVTFTVLYF).

It belongs to the glycosyltransferase 87 family.

Its subcellular location is the cell membrane. The catalysed reaction is Adds an alpha-D-arabinofuranosyl group from trans,octacis-decaprenylphospho-beta-D-arabinofuranose at the 3-O-position of an alpha-(1-&gt;5)-arabinofuranan chain attached to a beta-(1-&gt;5)-galactofuranan chain.. Its pathway is cell wall biogenesis; cell wall polysaccharide biosynthesis. Its function is as follows. Involved in the biosynthesis of the arabinogalactan (AG) region of the mycolylarabinogalactan-peptidoglycan (mAGP) complex, an essential component of the mycobacterial cell wall. Catalyzes the addition of an arabinofuranosyl (Araf) residue from the sugar donor beta-D-arabinofuranosyl-1-monophosphoryldecaprenol (DPA) on the C-3 of an alpha-(1-&gt;5)-linked Araf from the arabinan backbone of AG. The sequence is that of Alpha-(1-&gt;3)-arabinofuranosyltransferase (aftC) from Mycobacterium tuberculosis (strain CDC 1551 / Oshkosh).